We begin with the raw amino-acid sequence, 551 residues long: Trigger factor (551 aa).

The PPIase FKBP-type domain maps to 165-250; that stretch reads GDLVVLDFAG…ATDVRVPGET (86 aa). Residues 442 to 551 form a disordered region; the sequence is ADDDTIGKGH…APAKKKAAAE (110 aa). Positions 458-472 are enriched in basic and acidic residues; sequence GHDHHDHDHDHDHAA. Positions 513–541 are enriched in low complexity; it reads EAAPAPKKAPAKKAAAAKAEEAPAAAPKK. The span at 542 to 551 shows a compositional bias: basic residues; it reads APAKKKAAAE.

It belongs to the FKBP-type PPIase family. Tig subfamily.

Its subcellular location is the cytoplasm. The enzyme catalyses [protein]-peptidylproline (omega=180) = [protein]-peptidylproline (omega=0). Its function is as follows. Involved in protein export. Acts as a chaperone by maintaining the newly synthesized protein in an open conformation. Functions as a peptidyl-prolyl cis-trans isomerase. The chain is Trigger factor from Rhizorhabdus wittichii (strain DSM 6014 / CCUG 31198 / JCM 15750 / NBRC 105917 / EY 4224 / RW1) (Sphingomonas wittichii).